Here is a 327-residue protein sequence, read N- to C-terminus: MTPVPGEVDLLVVGAGPTGLFAAYYAGFRGMSVAVVDALPEPGGQVTAMYPEKMIYDVAGFPEVRGRDLVDALVRQAAQYDPVYLLGRHAEKLSEVEGGLLVDVGERESVRAGAVLVTAGIGEFTPRPLPAADDWLGRGVVHFIPELGAHSGQDVVVVGGGDSAFDWALALHPVARSVTLVHRRARFRAHAGLVDKVRGLGVPLITDAEVAEIRGDDAGPHEVELALAGDRRQVLPAQAVVAALGFTADLGPIESWGLELEKRTIRVDSTMRTSRERVYAAGDVAAYPGKVKLIATGFGEAATAVNNIAVALNPEAHLFPGHSSNMG.

FAD contacts are provided by Thr18, Asp37, Gln45, Tyr50, Ala90, Phe124, Asp283, and Ser324.

Belongs to the ferredoxin--NADP reductase type 2 family. As to quaternary structure, homodimer. FAD serves as cofactor.

It catalyses the reaction 2 reduced [2Fe-2S]-[ferredoxin] + NADP(+) + H(+) = 2 oxidized [2Fe-2S]-[ferredoxin] + NADPH. The protein is Ferredoxin--NADP reductase of Saccharopolyspora erythraea (strain ATCC 11635 / DSM 40517 / JCM 4748 / NBRC 13426 / NCIMB 8594 / NRRL 2338).